Consider the following 129-residue polypeptide: Protein BEX2 (129 aa).

Positions 1 to 38 (MESKVEQGVKNLNMENDHQEKEEKEEKPQDANKREPVV) are disordered. A compositionally biased stretch (basic and acidic residues) spans 15–36 (ENDHQEKEEKEEKPQDANKREP). Arginine 51 carries the omega-N-methylarginine modification. Residues 108–129 (SLRAVSTDPPHHDHHDEFCLMP) are disordered. Positions 116–129 (PPHHDHHDEFCLMP) are enriched in basic and acidic residues. Positions 118–122 (HHDHH) are his cluster. Cysteine 126 contributes to the Zn(2+) binding site.

The protein belongs to the BEX family. In terms of assembly, interacts with LMO2, possibly leading to regulate the transcriptional activity of a DNA-binding complex containing LMO2. Interacts with OMP.

The protein localises to the nucleus. It is found in the cytoplasm. Regulator of mitochondrial apoptosis and G1 cell cycle. Regulates the level of PP2A regulatory subunit B and PP2A phosphatase activity. In absence of reductive stress, acts as a pseudosubstrate for the CRL2(FEM1B) complex: associates with FEM1B via zinc, thereby preventing association between FEM1B and its substrates. The sequence is that of Protein BEX2 (Bex2) from Rattus norvegicus (Rat).